The sequence spans 337 residues: Heat-inducible transcription repressor HrcA (337 aa).

The protein belongs to the HrcA family.

Its function is as follows. Negative regulator of class I heat shock genes (grpE-dnaK-dnaJ and groELS operons). Prevents heat-shock induction of these operons. In Arthrobacter sp. (strain FB24), this protein is Heat-inducible transcription repressor HrcA.